The sequence spans 449 residues: Ribulose bisphosphate carboxylase large chain (449 aa).

Positions 1-2 (MS) are excised as a propeptide. Position 3 is an N-acetylproline (Pro-3). Lys-14 is modified (N6,N6,N6-trimethyllysine). Substrate is bound by residues Asn-123 and Thr-173. Lys-175 (proton acceptor) is an active-site residue. Lys-177 is a binding site for substrate. The Mg(2+) site is built by Lys-201, Asp-203, and Glu-204. Lys-201 carries the N6-carboxylysine modification. Residue His-294 is the Proton acceptor of the active site. Substrate is bound by residues Xaa-295, His-327, and Ser-379.

This sequence belongs to the RuBisCO large chain family. Type I subfamily. Heterohexadecamer of 8 large chains and 8 small chains; disulfide-linked. The disulfide link is formed within the large subunit homodimers. The cofactor is Mg(2+). In terms of processing, the disulfide bond which can form in the large chain dimeric partners within the hexadecamer appears to be associated with oxidative stress and protein turnover.

The protein resides in the plastid. Its subcellular location is the chloroplast. The enzyme catalyses 2 (2R)-3-phosphoglycerate + 2 H(+) = D-ribulose 1,5-bisphosphate + CO2 + H2O. The catalysed reaction is D-ribulose 1,5-bisphosphate + O2 = 2-phosphoglycolate + (2R)-3-phosphoglycerate + 2 H(+). Functionally, ruBisCO catalyzes two reactions: the carboxylation of D-ribulose 1,5-bisphosphate, the primary event in carbon dioxide fixation, as well as the oxidative fragmentation of the pentose substrate in the photorespiration process. Both reactions occur simultaneously and in competition at the same active site. In Salacia pallescens, this protein is Ribulose bisphosphate carboxylase large chain.